The chain runs to 999 residues: Receptor-like protein kinase 5 (999 aa).

The signal sequence occupies residues 1–14 (MLYCLILLLCLSST). At 15 to 621 (YLPSLSLNQD…LCRKITRSKN (607 aa)) the chain is on the extracellular side. 5 LRR repeats span residues 90–112 (SLHS…DFDT), 115–137 (NLIS…LPFN), 140–161 (NLKF…SFGE), 164–186 (KLES…LGNV), and 188–208 (TLKE…PSQL). N-linked (GlcNAc...) asparagine glycans are attached at residues asparagine 98 and asparagine 102. N-linked (GlcNAc...) asparagine glycosylation is found at asparagine 150 and asparagine 185. N-linked (GlcNAc...) asparagine glycosylation occurs at asparagine 210. LRR repeat units follow at residues 213-236 (ELQV…SRLT) and 237-259 (SLVN…ITQL). N-linked (GlcNAc...) asparagine glycans are attached at residues asparagine 269 and asparagine 282. LRR repeat units lie at residues 285-307 (TLKR…LNLL), 308-330 (NLES…ITRS), 332-353 (TLSE…QLGA), 356-378 (PLQY…VCGE), 380-402 (KLEY…LGKC), 404-427 (SLTR…WGLP), 428-450 (RLSL…IIGA), 452-474 (NLSN…IGSL), 500-523 (QLSR…RGWK), 524-546 (NLNE…VGIL), 548-569 (VLNY…ELQN), and 571-593 (KLNV…YANK). The N-linked (GlcNAc...) asparagine glycan is linked to asparagine 452. Asparagine 576 carries an N-linked (GlcNAc...) asparagine glycan. A helical membrane pass occupies residues 622–641 (IGYVWILLTIFLLAGLVFVV). The Cytoplasmic segment spans residues 642–999 (GIVMFIAKCR…PYYTEDLNSV (358 aa)). In terms of domain architecture, Protein kinase spans 683-968 (LDEKNVIGFG…KVVIMLQEVS (286 aa)). ATP-binding positions include 689–697 (IGFGSSGKV) and lysine 711. Residues tyrosine 766 and tyrosine 806 each carry the phosphotyrosine modification. Aspartate 819 acts as the Proton acceptor in catalysis. Serine 856 is subject to Phosphoserine. Residues tyrosine 864 and tyrosine 871 each carry the phosphotyrosine modification. Phosphothreonine is present on threonine 872. A disordered region spans residues 972–999 (PCSSPNTSKRSKTGGKLSPYYTEDLNSV).

It belongs to the protein kinase superfamily. Ser/Thr protein kinase family. In terms of assembly, interacts with CST. Binds to IDA. Requires Mg(2+) as cofactor. Mn(2+) is required as a cofactor. Post-translationally, autophosphorylated on Ser, Thr and Tyr residues. As to expression, expressed in roots and rosettes. Expressed at the base of petioles and pedicels, and in the abscission zones of the floral organs.

The protein localises to the cell membrane. The enzyme catalyses L-seryl-[protein] + ATP = O-phospho-L-seryl-[protein] + ADP + H(+). It carries out the reaction L-threonyl-[protein] + ATP = O-phospho-L-threonyl-[protein] + ADP + H(+). It catalyses the reaction L-tyrosyl-[protein] + ATP = O-phospho-L-tyrosyl-[protein] + ADP + H(+). Functionally, receptor with a dual specificity kinase activity acting on both serine/threonine- and tyrosine-containing substrates that controls floral organ abscission. May interact with the 'INFLORESCENCE DEFICIENT IN ABSCISSION' (IDA) ligands family. The polypeptide is Receptor-like protein kinase 5 (RLK5) (Arabidopsis thaliana (Mouse-ear cress)).